Consider the following 354-residue polypeptide: Uroporphyrinogen decarboxylase (354 aa).

Substrate-binding positions include 27–31 (RQAGR), Asp-77, Tyr-154, Thr-209, and His-327.

Belongs to the uroporphyrinogen decarboxylase family. In terms of assembly, homodimer.

It localises to the cytoplasm. The enzyme catalyses uroporphyrinogen III + 4 H(+) = coproporphyrinogen III + 4 CO2. The protein operates within porphyrin-containing compound metabolism; protoporphyrin-IX biosynthesis; coproporphyrinogen-III from 5-aminolevulinate: step 4/4. Its function is as follows. Catalyzes the decarboxylation of four acetate groups of uroporphyrinogen-III to yield coproporphyrinogen-III. This is Uroporphyrinogen decarboxylase from Salmonella arizonae (strain ATCC BAA-731 / CDC346-86 / RSK2980).